A 446-amino-acid chain; its full sequence is UDP-N-acetylmuramoylalanine--D-glutamate ligase (446 aa).

Residue 115 to 121 (GTNGKTT) coordinates ATP.

The protein belongs to the MurCDEF family.

Its subcellular location is the cytoplasm. The catalysed reaction is UDP-N-acetyl-alpha-D-muramoyl-L-alanine + D-glutamate + ATP = UDP-N-acetyl-alpha-D-muramoyl-L-alanyl-D-glutamate + ADP + phosphate + H(+). It functions in the pathway cell wall biogenesis; peptidoglycan biosynthesis. In terms of biological role, cell wall formation. Catalyzes the addition of glutamate to the nucleotide precursor UDP-N-acetylmuramoyl-L-alanine (UMA). This Trichlorobacter lovleyi (strain ATCC BAA-1151 / DSM 17278 / SZ) (Geobacter lovleyi) protein is UDP-N-acetylmuramoylalanine--D-glutamate ligase.